Reading from the N-terminus, the 490-residue chain is GTPase Der (490 aa).

EngA-type G domains follow at residues 3–166 (PVVA…MEDL) and 203–376 (IKLA…DSST). GTP-binding positions include 9–16 (GRPNVGKS), 56–60 (DTGGI), 118–121 (NKTD), 209–216 (GRPNVGKS), 256–260 (DTAGV), and 321–324 (NKWD). One can recognise a KH-like domain in the interval 377–461 (RRVGTSMLTR…PIRIQFKEGE (85 aa)).

The protein belongs to the TRAFAC class TrmE-Era-EngA-EngB-Septin-like GTPase superfamily. EngA (Der) GTPase family. Associates with the 50S ribosomal subunit.

Its function is as follows. GTPase that plays an essential role in the late steps of ribosome biogenesis. In Escherichia coli O7:K1 (strain IAI39 / ExPEC), this protein is GTPase Der.